Consider the following 161-residue polypeptide: Lincosamide resistance protein (161 aa).

This chain is Lincosamide resistance protein (linA), found in Staphylococcus haemolyticus.